The chain runs to 180 residues: ADP-ribosylation factor-like protein 1 (180 aa).

The N-myristoyl glycine moiety is linked to residue Gly2. Residues Gly23–Thr30, Asp66–Gln70, and Asn125–Asp128 contribute to the GTP site.

The protein belongs to the small GTPase superfamily. Arf family. Expressed in neuronal cells. Expression in hypodermal tissues is absent.

It is found in the golgi apparatus. Its subcellular location is the cytoplasm. The protein localises to the cytoplasmic granule. Functionally, GTP-binding protein that may be involved in protein trafficking; may modulate vesicle budding and uncoating within the Golgi apparatus. Plays a role in male tail tip morphogenesis. The chain is ADP-ribosylation factor-like protein 1 from Caenorhabditis elegans.